Reading from the N-terminus, the 42-residue chain is Photosystem I reaction center subunit IX (42 aa).

Residues 7-27 (YLSVAPVLSTLWFGALAGLLI) traverse the membrane as a helical segment.

It belongs to the PsaJ family.

It localises to the plastid. Its subcellular location is the chloroplast thylakoid membrane. Functionally, may help in the organization of the PsaE and PsaF subunits. The sequence is that of Photosystem I reaction center subunit IX from Agrostis stolonifera (Creeping bentgrass).